A 210-amino-acid chain; its full sequence is ER membrane protein complex subunit 8 (210 aa).

In terms of domain architecture, MPN spans 4–150; it reads VKLTTQAYCK…IHVYEHHENR (147 aa).

The protein belongs to the EMC8/EMC9 family. Component of the ER membrane protein complex (EMC). EMC8 and EMC9 are mutually exclusive subunits of the EMC complex. In terms of tissue distribution, expressed in liver, pancreas, heart, lung, kidney, brain, skeletal muscle, and placenta. Expression levels are highest in pancreas and moderate in heart, skeletal muscle, and placenta.

It localises to the endoplasmic reticulum membrane. Its function is as follows. Part of the endoplasmic reticulum membrane protein complex (EMC) that enables the energy-independent insertion into endoplasmic reticulum membranes of newly synthesized membrane proteins. Preferentially accommodates proteins with transmembrane domains that are weakly hydrophobic or contain destabilizing features such as charged and aromatic residues. Involved in the cotranslational insertion of multi-pass membrane proteins in which stop-transfer membrane-anchor sequences become ER membrane spanning helices. It is also required for the post-translational insertion of tail-anchored/TA proteins in endoplasmic reticulum membranes. By mediating the proper cotranslational insertion of N-terminal transmembrane domains in an N-exo topology, with translocated N-terminus in the lumen of the ER, controls the topology of multi-pass membrane proteins like the G protein-coupled receptors. By regulating the insertion of various proteins in membranes, it is indirectly involved in many cellular processes. This is ER membrane protein complex subunit 8 (EMC8) from Homo sapiens (Human).